The sequence spans 351 residues: Holliday junction branch migration complex subunit RuvB (351 aa).

A large ATPase domain (RuvB-L) region spans residues 1 to 186 (MDEKIETRLI…FGIVQRLEFY (186 aa)). Residues isoleucine 25, arginine 26, glycine 67, lysine 70, threonine 71, threonine 72, 133 to 135 (EDF), arginine 176, tyrosine 186, and arginine 223 contribute to the ATP site. A Mg(2+)-binding site is contributed by threonine 71. Residues 187–257 (RIPDLIHIVK…IAKEALDLLN (71 aa)) are small ATPAse domain (RuvB-S). The head domain (RuvB-H) stretch occupies residues 260 to 351 (IRGLDVMDRK…ENFDLLGKVE (92 aa)). The DNA site is built by arginine 296, arginine 315, and arginine 320.

The protein belongs to the RuvB family. In terms of assembly, homohexamer. Forms an RuvA(8)-RuvB(12)-Holliday junction (HJ) complex. HJ DNA is sandwiched between 2 RuvA tetramers; dsDNA enters through RuvA and exits via RuvB. An RuvB hexamer assembles on each DNA strand where it exits the tetramer. Each RuvB hexamer is contacted by two RuvA subunits (via domain III) on 2 adjacent RuvB subunits; this complex drives branch migration. In the full resolvosome a probable DNA-RuvA(4)-RuvB(12)-RuvC(2) complex forms which resolves the HJ.

It is found in the cytoplasm. The enzyme catalyses ATP + H2O = ADP + phosphate + H(+). Its function is as follows. The RuvA-RuvB-RuvC complex processes Holliday junction (HJ) DNA during genetic recombination and DNA repair, while the RuvA-RuvB complex plays an important role in the rescue of blocked DNA replication forks via replication fork reversal (RFR). RuvA specifically binds to HJ cruciform DNA, conferring on it an open structure. The RuvB hexamer acts as an ATP-dependent pump, pulling dsDNA into and through the RuvAB complex. RuvB forms 2 homohexamers on either side of HJ DNA bound by 1 or 2 RuvA tetramers; 4 subunits per hexamer contact DNA at a time. Coordinated motions by a converter formed by DNA-disengaged RuvB subunits stimulates ATP hydrolysis and nucleotide exchange. Immobilization of the converter enables RuvB to convert the ATP-contained energy into a lever motion, pulling 2 nucleotides of DNA out of the RuvA tetramer per ATP hydrolyzed, thus driving DNA branch migration. The RuvB motors rotate together with the DNA substrate, which together with the progressing nucleotide cycle form the mechanistic basis for DNA recombination by continuous HJ branch migration. Branch migration allows RuvC to scan DNA until it finds its consensus sequence, where it cleaves and resolves cruciform DNA. The sequence is that of Holliday junction branch migration complex subunit RuvB from Coxiella burnetii (strain RSA 331 / Henzerling II).